The chain runs to 314 residues: Probable carboxylesterase 2 (314 aa).

The short motif at 79–81 (HGG) is the Involved in the stabilization of the negatively charged intermediate by the formation of the oxyanion hole element. Catalysis depends on residues serine 158, aspartate 254, and histidine 286.

The protein belongs to the 'GDXG' lipolytic enzyme family. In terms of tissue distribution, expressed in roots and flowers.

It carries out the reaction a carboxylic ester + H2O = an alcohol + a carboxylate + H(+). In terms of biological role, carboxylesterase acting on esters with varying acyl chain length. The sequence is that of Probable carboxylesterase 2 (CXE2) from Arabidopsis thaliana (Mouse-ear cress).